Reading from the N-terminus, the 515-residue chain is Germ cell-less protein-like 1 (515 aa).

The tract at residues 1 to 35 (MGSLSSRVLRQPRPALAQQAQGARAGGSARRPDTG) is disordered. Over residues 11-29 (QPRPALAQQAQGARAGGSA) the composition is skewed to low complexity. Residues 49 to 55 (SHKRKRS) carry the Nuclear localization signal motif. The interval 65 to 85 (DSETDEDEEEGDEQQRLLNTP) is disordered. Serine 66 carries the post-translational modification Phosphoserine. The segment covering 67–76 (ETDEDEEEGD) has biased composition (acidic residues). The residue at position 68 (threonine 68) is a Phosphothreonine. A Nuclear localization signal motif is present at residues 85-91 (PRRKKLK). The region spanning 108–178 (SDIKICALGE…LYRDDVLIKP (71 aa)) is the BTB domain.

In terms of assembly, interacts with TMPO-beta, TSG101 and TFDP2. Interacts with EMD.

The protein resides in the nucleus matrix. Functionally, possible function in spermatogenesis. Enhances the degradation of MDM2 and increases the amount of p53 probably by modulating the nucleocytoplasmic transport. The chain is Germ cell-less protein-like 1 (GMCL1) from Homo sapiens (Human).